The chain runs to 264 residues: Apolipoprotein A-I (264 aa).

A signal peptide spans Met-1–Ala-18. 2 consecutive repeat copies span residues Leu-67 to Gly-88 and Ser-89 to Asn-110. The 10 X approximate tandem repeats stretch occupies residues Leu-67–Gln-264. Met-109 carries the post-translational modification Methionine sulfoxide. The 3; half-length repeat unit spans residues Lys-111 to Gln-121. A run of 5 repeats spans residues Ser-122–Val-142, Pro-144–Ala-165, Pro-166–Gly-187, Ser-188–Ala-208, and Pro-209–Lys-229. At Met-193 the chain carries Methionine sulfoxide. Residues Pro-230–Met-240 form a 9; half-length repeat. Met-240 carries the methionine sulfoxide modification. Residues Pro-241–Gln-264 form repeat 10.

It belongs to the apolipoprotein A1/A4/E family. As to quaternary structure, homodimer. Interacts with APOA1BP and CLU. Component of a sperm activating protein complex (SPAP), consisting of APOA1, an immunoglobulin heavy chain, an immunoglobulin light chain and albumin. Interacts with NDRG1. Interacts with SCGB3A2. Interacts with NAXE and YJEFN3. Post-translationally, glycosylated. Palmitoylated. In terms of processing, phosphorylation sites are present in the extracellular medium. In terms of tissue distribution, major protein of plasma HDL, also found in chylomicrons.

The protein resides in the secreted. Functionally, participates in the reverse transport of cholesterol from tissues to the liver for excretion by promoting cholesterol efflux from tissues and by acting as a cofactor for the lecithin cholesterol acyltransferase (LCAT). As part of the SPAP complex, activates spermatozoa motility. The sequence is that of Apolipoprotein A-I (Apoa1) from Heterocephalus glaber (Naked mole rat).